The chain runs to 111 residues: MSDTLNRLAEVLEERKQAAPDSSYVASLYHKGLNKILEKLGEESIETIIAAKDAATSKDYSDVIYETADLWFHSLVMLSALGQHPQAVLDELERRFGLSGHDEKAARQPSA.

Belongs to the PRA-PH family.

The protein localises to the cytoplasm. It catalyses the reaction 1-(5-phospho-beta-D-ribosyl)-ATP + H2O = 1-(5-phospho-beta-D-ribosyl)-5'-AMP + diphosphate + H(+). It participates in amino-acid biosynthesis; L-histidine biosynthesis; L-histidine from 5-phospho-alpha-D-ribose 1-diphosphate: step 2/9. This Pseudomonas entomophila (strain L48) protein is Phosphoribosyl-ATP pyrophosphatase.